We begin with the raw amino-acid sequence, 323 residues long: Beta-ketoacyl-[acyl-carrier-protein] synthase III (323 aa).

Catalysis depends on residues Cys113 and His250. Residues 251–255 (QANKR) form an ACP-binding region. Asn280 is an active-site residue.

The protein belongs to the thiolase-like superfamily. FabH family. As to quaternary structure, homodimer.

The protein localises to the cytoplasm. It carries out the reaction malonyl-[ACP] + acetyl-CoA + H(+) = 3-oxobutanoyl-[ACP] + CO2 + CoA. Its pathway is lipid metabolism; fatty acid biosynthesis. Its function is as follows. Catalyzes the condensation reaction of fatty acid synthesis by the addition to an acyl acceptor of two carbons from malonyl-ACP. Catalyzes the first condensation reaction which initiates fatty acid synthesis and may therefore play a role in governing the total rate of fatty acid production. Possesses both acetoacetyl-ACP synthase and acetyl transacylase activities. Its substrate specificity determines the biosynthesis of branched-chain and/or straight-chain of fatty acids. In Brucella canis (strain ATCC 23365 / NCTC 10854 / RM-666), this protein is Beta-ketoacyl-[acyl-carrier-protein] synthase III.